The chain runs to 188 residues: Ion-translocating oxidoreductase complex subunit B (188 aa).

Residues 1-23 form a hydrophobic region; the sequence is MIEAAVSMSALGLGLGLLLGVAA. The 60-residue stretch at 29-88 folds into the 4Fe-4S domain; that stretch reads ESPPIVDAIEGILPGTNCGACGYPGCRGLAEAMSEGAAPVTACAPGGRDVALALAAIVET. Residues Cys46, Cys49, Cys54, Cys71, Cys113, Cys116, Cys119, Cys123, Cys143, Cys146, Cys149, and Cys153 each coordinate [4Fe-4S] cluster. 4Fe-4S ferredoxin-type domains follow at residues 104–133 and 134–163; these read TVAFIFEDHCTGCMRCFKRCPTDAIIGANR and QIHTVVTDACIGCNACIEACPTEAIVARVK.

The protein belongs to the 4Fe4S bacterial-type ferredoxin family. RnfB subfamily. The complex is composed of six subunits: RnfA, RnfB, RnfC, RnfD, RnfE and RnfG. It depends on [4Fe-4S] cluster as a cofactor.

It is found in the cellular chromatophore membrane. Part of a membrane-bound complex that couples electron transfer with translocation of ions across the membrane. In Cereibacter sphaeroides (strain ATCC 17023 / DSM 158 / JCM 6121 / CCUG 31486 / LMG 2827 / NBRC 12203 / NCIMB 8253 / ATH 2.4.1.) (Rhodobacter sphaeroides), this protein is Ion-translocating oxidoreductase complex subunit B.